A 50-amino-acid chain; its full sequence is Basic phospholipase A2 Bmaj-9 (50 aa).

The Ca(2+) site is built by Tyr27, Gly29, and Gly31. The cysteines at positions 28 and 45 are disulfide-linked. His48 is a catalytic residue. Asp49 serves as a coordination point for Ca(2+).

It belongs to the phospholipase A2 family. Group II subfamily. D49 sub-subfamily. The cofactor is Ca(2+). As to expression, expressed by the venom gland.

The protein localises to the secreted. The enzyme catalyses a 1,2-diacyl-sn-glycero-3-phosphocholine + H2O = a 1-acyl-sn-glycero-3-phosphocholine + a fatty acid + H(+). Its function is as follows. Snake venom phospholipase A2 (PLA2) that causes irreversible neuromuscular blockade in chick biventer cervicis muscle preparations. The neuromuscular blockade is mediated by inhibitory action at the presynaptic motor nerve endings. PLA2 catalyzes the calcium-dependent hydrolysis of the 2-acyl groups in 3-sn-phosphoglycerides. The protein is Basic phospholipase A2 Bmaj-9 of Bothrops marajoensis (Marajo lancehead).